The following is a 312-amino-acid chain: Olfactory receptor 1D2 (312 aa).

The Extracellular portion of the chain corresponds to 1–25 (MDGGNQSEGSEFLLLGMSESPEQQR). Asparagine 5 carries an N-linked (GlcNAc...) asparagine glycan. A helical transmembrane segment spans residues 26-49 (ILFWMFLSMYLVTVVGNVLIILAI). The Cytoplasmic portion of the chain corresponds to 50 to 57 (SSDSRLHT). The chain crosses the membrane as a helical span at residues 58–79 (PVYFFLANLSFTDLFFVTNTIP). Residues 80-100 (KMLVNLQSHNKAISYAGCLTQ) are Extracellular-facing. Cysteine 97 and cysteine 189 are joined by a disulfide. The chain crosses the membrane as a helical span at residues 101-120 (LYFLVSLVALDNLILAVMAY). At 121–139 (DRYVAICCPLHYTTAMSPK) the chain is on the cytoplasmic side. Residues 140–158 (LCILLLSLCWVLSVLYGLI) traverse the membrane as a helical segment. Topologically, residues 159-196 (HTLLMTRVTFCGSRKIHYIFCEMYVLLRMACSNIQINH) are extracellular. Asparagine 195 carries an N-linked (GlcNAc...) asparagine glycan. A helical transmembrane segment spans residues 197-219 (TVLIATGCFIFLIPFGFVIISYV). Topologically, residues 220 to 236 (LIIRAILRIPSVSKKYK) are cytoplasmic. Residues 237–259 (AFSTCASHLGAVSLFYGTLCMVY) traverse the membrane as a helical segment. Over 260–271 (LKPLHTYSVKDS) the chain is Extracellular. Residues 272–291 (VATVMYAVVTPMMNPFIYSL) traverse the membrane as a helical segment. Residues 292 to 312 (RNKDMHGALGRLLDKHFKRLT) are Cytoplasmic-facing.

It belongs to the G-protein coupled receptor 1 family. As to expression, expressed in testis. Expressed in spermatozoa (at protein level). Expressed in olfactory epithelium.

Its subcellular location is the cell membrane. Its function is as follows. Odorant receptor which may be involved in sperm chemotaxis. Bourgeonal is a strong chemoattractant for sperm in vitro and is shown to be a strong agonist for OR1D2 in vitro. May also function in olfactory reception. This Homo sapiens (Human) protein is Olfactory receptor 1D2 (OR1D2).